Reading from the N-terminus, the 304-residue chain is Non-specific ribonucleoside hydrolase RihC (304 aa).

Histidine 233 is a catalytic residue.

This sequence belongs to the IUNH family. RihC subfamily.

In terms of biological role, hydrolyzes both purine and pyrimidine ribonucleosides with a broad-substrate specificity. This is Non-specific ribonucleoside hydrolase RihC from Escherichia coli O8 (strain IAI1).